Consider the following 436-residue polypeptide: GTPase Der (436 aa).

EngA-type G domains lie at 4–167 and 175–351; these read PTIA…PNEE and IKFS…QSQN. Residues 10–17, 57–61, 119–122, 181–188, 229–233, and 294–297 contribute to the GTP site; these read GRPNVGKS, DTGGI, NKVD, DTAGM, and NKWD. A KH-like domain is found at 352–436; sequence TRIPSAVLND…PIHLIARKRK (85 aa).

The protein belongs to the TRAFAC class TrmE-Era-EngA-EngB-Septin-like GTPase superfamily. EngA (Der) GTPase family. As to quaternary structure, associates with the 50S ribosomal subunit.

Its function is as follows. GTPase that plays an essential role in the late steps of ribosome biogenesis. This Streptococcus gordonii (strain Challis / ATCC 35105 / BCRC 15272 / CH1 / DL1 / V288) protein is GTPase Der.